We begin with the raw amino-acid sequence, 300 residues long: Protoheme IX farnesyltransferase (300 aa).

9 helical membrane passes run 24-44 (VTQL…PGMV), 46-66 (WHVL…AFAI), 94-114 (PQIL…LYTF), 118-138 (LTMW…TLLL), 146-166 (IVIG…AVTG), 172-192 (AWIL…VLAL), 217-237 (LHIL…FISG), 239-259 (SGAV…AYAW), and 278-298 (IVYL…RPLL).

It belongs to the UbiA prenyltransferase family. Protoheme IX farnesyltransferase subfamily.

The protein resides in the cell inner membrane. The enzyme catalyses heme b + (2E,6E)-farnesyl diphosphate + H2O = Fe(II)-heme o + diphosphate. It participates in porphyrin-containing compound metabolism; heme O biosynthesis; heme O from protoheme: step 1/1. In terms of biological role, converts heme B (protoheme IX) to heme O by substitution of the vinyl group on carbon 2 of heme B porphyrin ring with a hydroxyethyl farnesyl side group. The polypeptide is Protoheme IX farnesyltransferase (Burkholderia lata (strain ATCC 17760 / DSM 23089 / LMG 22485 / NCIMB 9086 / R18194 / 383)).